Here is a 255-residue protein sequence, read N- to C-terminus: tRNA pseudouridine synthase A (255 aa).

Asp-52 functions as the Nucleophile in the catalytic mechanism. Position 111 (Tyr-111) interacts with substrate.

This sequence belongs to the tRNA pseudouridine synthase TruA family. As to quaternary structure, homodimer.

The catalysed reaction is uridine(38/39/40) in tRNA = pseudouridine(38/39/40) in tRNA. Formation of pseudouridine at positions 38, 39 and 40 in the anticodon stem and loop of transfer RNAs. The protein is tRNA pseudouridine synthase A of Cereibacter sphaeroides (strain ATCC 17023 / DSM 158 / JCM 6121 / CCUG 31486 / LMG 2827 / NBRC 12203 / NCIMB 8253 / ATH 2.4.1.) (Rhodobacter sphaeroides).